Consider the following 94-residue polypeptide: Pyrimidine/purine nucleoside phosphorylase (94 aa).

The protein belongs to the nucleoside phosphorylase PpnP family.

It catalyses the reaction a purine D-ribonucleoside + phosphate = a purine nucleobase + alpha-D-ribose 1-phosphate. The catalysed reaction is adenosine + phosphate = alpha-D-ribose 1-phosphate + adenine. It carries out the reaction cytidine + phosphate = cytosine + alpha-D-ribose 1-phosphate. The enzyme catalyses guanosine + phosphate = alpha-D-ribose 1-phosphate + guanine. It catalyses the reaction inosine + phosphate = alpha-D-ribose 1-phosphate + hypoxanthine. The catalysed reaction is thymidine + phosphate = 2-deoxy-alpha-D-ribose 1-phosphate + thymine. It carries out the reaction uridine + phosphate = alpha-D-ribose 1-phosphate + uracil. The enzyme catalyses xanthosine + phosphate = alpha-D-ribose 1-phosphate + xanthine. Functionally, catalyzes the phosphorolysis of diverse nucleosides, yielding D-ribose 1-phosphate and the respective free bases. Can use uridine, adenosine, guanosine, cytidine, thymidine, inosine and xanthosine as substrates. Also catalyzes the reverse reactions. The chain is Pyrimidine/purine nucleoside phosphorylase from Psychromonas ingrahamii (strain DSM 17664 / CCUG 51855 / 37).